The sequence spans 225 residues: ATP-dependent dethiobiotin synthetase BioD (225 aa).

12-17 (EVGKTY) contributes to the ATP binding site. Thr-16 serves as a coordination point for Mg(2+). The active site involves Lys-37. Ser-41 lines the substrate pocket. ATP is bound by residues Asp-52, 114–117 (EGAG), and 174–175 (NC). Mg(2+) contacts are provided by Asp-52 and Glu-114.

It belongs to the dethiobiotin synthetase family. Homodimer. The cofactor is Mg(2+).

Its subcellular location is the cytoplasm. The enzyme catalyses (7R,8S)-7,8-diammoniononanoate + CO2 + ATP = (4R,5S)-dethiobiotin + ADP + phosphate + 3 H(+). It participates in cofactor biosynthesis; biotin biosynthesis; biotin from 7,8-diaminononanoate: step 1/2. Functionally, catalyzes a mechanistically unusual reaction, the ATP-dependent insertion of CO2 between the N7 and N8 nitrogen atoms of 7,8-diaminopelargonic acid (DAPA, also called 7,8-diammoniononanoate) to form a ureido ring. In Francisella tularensis subsp. mediasiatica (strain FSC147), this protein is ATP-dependent dethiobiotin synthetase BioD.